A 255-amino-acid chain; its full sequence is Aliphatic sulfonates import ATP-binding protein SsuB (255 aa).

The 222-residue stretch at 12 to 233 (LLLNAVSKHY…RLGSVRLAEL (222 aa)) folds into the ABC transporter domain. 44-51 (GRSGGGKS) lines the ATP pocket.

Belongs to the ABC transporter superfamily. Aliphatic sulfonates importer (TC 3.A.1.17.2) family. In terms of assembly, the complex is composed of two ATP-binding proteins (SsuB), two transmembrane proteins (SsuC) and a solute-binding protein (SsuA).

Its subcellular location is the cell inner membrane. The catalysed reaction is ATP + H2O + aliphatic sulfonate-[sulfonate-binding protein]Side 1 = ADP + phosphate + aliphatic sulfonateSide 2 + [sulfonate-binding protein]Side 1.. Its function is as follows. Part of the ABC transporter complex SsuABC involved in aliphatic sulfonates import. Responsible for energy coupling to the transport system. In Escherichia coli O6:H1 (strain CFT073 / ATCC 700928 / UPEC), this protein is Aliphatic sulfonates import ATP-binding protein SsuB.